The primary structure comprises 425 residues: High-affinity branched-chain amino acid transport system permease protein LivM (425 aa).

Transmembrane regions (helical) follow at residues 6-26, 45-65, 92-112, 120-140, 145-165, 167-187, 191-211, 260-280, 311-331, 353-373, and 387-407; these read IAMA…FMGV, WQWV…RPAF, FLVA…RGTV, IYII…LLVL, FYAI…LGFW, CLPI…FPVL, GDYL…LLLN, RVIF…FVIN, IKLT…TLFA, IVVL…ILLV, and MLML…GLLP.

Belongs to the binding-protein-dependent transport system permease family. LivHM subfamily.

The protein localises to the cell inner membrane. In terms of biological role, part of the binding-protein-dependent transport system for branched-chain amino acids. Probably responsible for the translocation of the substrates across the membrane. The polypeptide is High-affinity branched-chain amino acid transport system permease protein LivM (livM) (Escherichia coli (strain K12)).